Consider the following 638-residue polypeptide: SUMO-activating enzyme subunit 2 (638 aa).

Residues 24 to 29 (GAGGIG), D48, 56 to 59 (NLNR), K72, 95 to 96 (SI), and 117 to 122 (DNRAAR) contribute to the ATP site. Positions 158 and 161 each coordinate Zn(2+). A Glycyl lysine isopeptide (Lys-Gly) (interchain with G-Cter in SUMO1) cross-link involves residue K164. The active-site Glycyl thioester intermediate is C173. K190 participates in a covalent cross-link: Glycyl lysine isopeptide (Lys-Gly) (interchain with G-Cter in SUMO). The disordered stretch occupies residues 202–233 (ADQEVSPDRADPEAAWEPTEAEARARASNEDG). S207 carries the post-translational modification Phosphoserine. The segment covering 222–233 (AEARARASNEDG) has biased composition (basic and acidic residues). A Glycyl lysine isopeptide (Lys-Gly) (interchain with G-Cter in SUMO1); alternate cross-link involves residue K236. Residues K236 and K257 each participate in a glycyl lysine isopeptide (Lys-Gly) (interchain with G-Cter in SUMO2); alternate cross-link. Glycyl lysine isopeptide (Lys-Gly) (interchain with G-Cter in SUMO); alternate cross-links involve residues K257 and K271. K271 is modified (N6-acetyllysine; alternate). K275 is covalently cross-linked (Glycyl lysine isopeptide (Lys-Gly) (interchain with G-Cter in SUMO)). K369 is covalently cross-linked (Glycyl lysine isopeptide (Lys-Gly) (interchain with G-Cter in SUMO2)). Residue K418 forms a Glycyl lysine isopeptide (Lys-Gly) (interchain with G-Cter in SUMO1); alternate linkage. K418 participates in a covalent cross-link: Glycyl lysine isopeptide (Lys-Gly) (interchain with G-Cter in SUMO2); alternate. 2 residues coordinate Zn(2+): C439 and C442. Position 505 is a phosphoserine (S505). K538 participates in a covalent cross-link: Glycyl lysine isopeptide (Lys-Gly) (interchain with G-Cter in SUMO2). S548 and S590 each carry phosphoserine. Basic and acidic residues predominate over residues 548–561 (SPEKVGPKQAEDAA). The disordered stretch occupies residues 548–638 (SPEKVGPKQA…EDPDDVIALD (91 aa)). A compositionally biased stretch (acidic residues) spans 581 to 594 (EQDDVLIVDSDEEG). The segment covering 603–614 (GDDKARKRKLEE) has biased composition (basic and acidic residues). A Glycyl lysine isopeptide (Lys-Gly) (interchain with G-Cter in SUMO) cross-link involves residue K609. K611 is covalently cross-linked (Glycyl lysine isopeptide (Lys-Gly) (interchain with G-Cter in SUMO); alternate). At K611 the chain carries N6-acetyllysine; alternate. Residue K621 forms a Glycyl lysine isopeptide (Lys-Gly) (interchain with G-Cter in SUMO) linkage. Over residues 628 to 638 (MEDPDDVIALD) the composition is skewed to acidic residues.

The protein belongs to the ubiquitin-activating E1 family. Heterodimer of SAE1 and UBA2/SAE2. The heterodimer corresponds to the two domains that are encoded on a single polypeptide chain in ubiquitin-activating enzyme E1. Interacts with UBE2I. In terms of processing, sumoylated with SUMO1 and SUMO2/3 and by UBC9. Sumoylation at Lys-236 inhibits enzymatic activity. Sumoylation at the C-terminal lysine cluster plays an essential role in nuclear trafficking. In terms of tissue distribution, broadly expressed, with highest levels in testis.

The protein localises to the cytoplasm. It localises to the nucleus. It functions in the pathway protein modification; protein sumoylation. In terms of biological role, the heterodimer acts as an E1 ligase for SUMO1, SUMO2, SUMO3, and probably SUMO4. It mediates ATP-dependent activation of SUMO proteins followed by formation of a thioester bond between a SUMO protein and a conserved active site cysteine residue on UBA2/SAE2. This Mus musculus (Mouse) protein is SUMO-activating enzyme subunit 2 (Uba2).